The sequence spans 463 residues: A-type ATP synthase subunit B (463 aa).

Belongs to the ATPase alpha/beta chains family. In terms of assembly, has multiple subunits with at least A(3), B(3), C, D, E, F, H, I and proteolipid K(x).

Its subcellular location is the cell membrane. Component of the A-type ATP synthase that produces ATP from ADP in the presence of a proton gradient across the membrane. The B chain is a regulatory subunit. The sequence is that of A-type ATP synthase subunit B from Methanothrix thermoacetophila (strain DSM 6194 / JCM 14653 / NBRC 101360 / PT) (Methanosaeta thermophila).